Consider the following 377-residue polypeptide: UDP-N-acetylglucosamine--N-acetylmuramyl-(pentapeptide) pyrophosphoryl-undecaprenol N-acetylglucosamine transferase (377 aa).

UDP-N-acetyl-alpha-D-glucosamine contacts are provided by residues 29–31 (TAG), Asn-142, Arg-179, Ser-213, and Gln-308.

The protein belongs to the glycosyltransferase 28 family. MurG subfamily.

It is found in the cell membrane. It carries out the reaction di-trans,octa-cis-undecaprenyl diphospho-N-acetyl-alpha-D-muramoyl-L-alanyl-D-glutamyl-meso-2,6-diaminopimeloyl-D-alanyl-D-alanine + UDP-N-acetyl-alpha-D-glucosamine = di-trans,octa-cis-undecaprenyl diphospho-[N-acetyl-alpha-D-glucosaminyl-(1-&gt;4)]-N-acetyl-alpha-D-muramoyl-L-alanyl-D-glutamyl-meso-2,6-diaminopimeloyl-D-alanyl-D-alanine + UDP + H(+). It participates in cell wall biogenesis; peptidoglycan biosynthesis. Cell wall formation. Catalyzes the transfer of a GlcNAc subunit on undecaprenyl-pyrophosphoryl-MurNAc-pentapeptide (lipid intermediate I) to form undecaprenyl-pyrophosphoryl-MurNAc-(pentapeptide)GlcNAc (lipid intermediate II). The chain is UDP-N-acetylglucosamine--N-acetylmuramyl-(pentapeptide) pyrophosphoryl-undecaprenol N-acetylglucosamine transferase from Saccharopolyspora erythraea (strain ATCC 11635 / DSM 40517 / JCM 4748 / NBRC 13426 / NCIMB 8594 / NRRL 2338).